The following is a 487-amino-acid chain: Glutamyl-tRNA(Gln) amidotransferase subunit A (487 aa).

Catalysis depends on charge relay system residues lysine 79 and serine 154. Serine 178 (acyl-ester intermediate) is an active-site residue.

Belongs to the amidase family. GatA subfamily. As to quaternary structure, heterotrimer of A, B and C subunits.

It catalyses the reaction L-glutamyl-tRNA(Gln) + L-glutamine + ATP + H2O = L-glutaminyl-tRNA(Gln) + L-glutamate + ADP + phosphate + H(+). Functionally, allows the formation of correctly charged Gln-tRNA(Gln) through the transamidation of misacylated Glu-tRNA(Gln) in organisms which lack glutaminyl-tRNA synthetase. The reaction takes place in the presence of glutamine and ATP through an activated gamma-phospho-Glu-tRNA(Gln). This Moorella thermoacetica (strain ATCC 39073 / JCM 9320) protein is Glutamyl-tRNA(Gln) amidotransferase subunit A.